We begin with the raw amino-acid sequence, 282 residues long: uncharacterized protein (282 aa).

Positions 4–80 (STLTSKLESL…VDYLSDEKQY (77 aa)) constitute an HTH rpiR-type domain. The H-T-H motif DNA-binding region spans 40-59 (VAELAQAAGVSSASVIRFTR). The 141-residue stretch at 125–265 (IAQKIVEAKR…FFKYLTLTNE (141 aa)) folds into the SIS domain.

This is an uncharacterized protein from Providencia stuartii.